The chain runs to 62 residues: U-stichotoxin-Hau1a (62 aa).

An N-terminal signal peptide occupies residues 1–21; that stretch reads MKPAIFLMLFVAMFLISEGEG. Residues 22-31 constitute a propeptide that is removed on maturation; the sequence is FKPKDAPQER. Proline 36 bears the Hydroxyproline mark. Disulfide bonds link cysteine 41–cysteine 53 and cysteine 44–cysteine 59.

It belongs to the Hau1a/HC18/HC19 family.

It is found in the secreted. The protein resides in the nematocyst. Its function is as follows. Toxin that is lethal to crab. Does not produce the typical symptoms associated with sodium channel toxins in crabs, suggesting that it likely does not act on sodium channels. This Heteractis aurora (Banded sea anemone) protein is U-stichotoxin-Hau1a.